We begin with the raw amino-acid sequence, 615 residues long: Protein DlpA (615 aa).

It belongs to the isocitrate and isopropylmalate dehydrogenases family. The protein to M.jannaschii MJ0644 in the C-terminal section.

This Legionella pneumophila subsp. pneumophila (strain Philadelphia 1 / ATCC 33152 / DSM 7513) protein is Protein DlpA (dlpA).